The following is a 174-amino-acid chain: Micrococcal nuclease (174 aa).

The first 23 residues, 1–23 (MKSALAALRAVAAAVVLIVSVPA), serve as a signal peptide directing secretion. Residues R52, E60, and R94 contribute to the active site.

This sequence belongs to the thermonuclease family.

It catalyses the reaction Endonucleolytic cleavage to nucleoside 3'-phosphates and 3'-phosphooligonucleotide end-products.. The polypeptide is Micrococcal nuclease (nuc) (Shigella flexneri).